A 484-amino-acid chain; its full sequence is Glucan endo-1,3-beta-glucosidase 5 (484 aa).

The N-terminal stretch at 1-26 is a signal peptide; the sequence is MLFKGVFAVFFVITLLYASLLIEVEG. Asn-102 carries N-linked (GlcNAc...) asparagine glycosylation. Glu-122 serves as the catalytic Proton donor. 2 N-linked (GlcNAc...) asparagine glycosylation sites follow: Asn-129 and Asn-260. The active-site Nucleophile is Glu-267. Cys-366 and Cys-428 are oxidised to a cystine. The N-linked (GlcNAc...) asparagine glycan is linked to Asn-409. The GPI-anchor amidated alanine moiety is linked to residue Ala-460. A propeptide spans 461–484 (removed in mature form); that stretch reads SAMMPITRSTAVLLLLSICLYIVL.

The protein belongs to the glycosyl hydrolase 17 family. Contains two additional disulfide bonds.

Its subcellular location is the cell membrane. The enzyme catalyses Hydrolysis of (1-&gt;3)-beta-D-glucosidic linkages in (1-&gt;3)-beta-D-glucans.. The protein is Glucan endo-1,3-beta-glucosidase 5 of Arabidopsis thaliana (Mouse-ear cress).